The primary structure comprises 401 residues: Alternative oxidase, mitochondrial (401 aa).

A disordered region spans residues 53–81 (KRASLSLQPSVREAEKSQGPVVGSEGRGV). Residues 184–204 (LFRIILLESIAGVPGMVGGTL) form a helical membrane-spanning segment. E191, E230, and H233 together coordinate Fe cation. A helical transmembrane segment spans residues 249-269 (ALVLAAQGVFYNAFFLTYLIS). 4 residues coordinate Fe cation: E281, E282, E335, and H338.

The protein belongs to the alternative oxidase family. Requires Fe cation as cofactor.

Its subcellular location is the mitochondrion inner membrane. In terms of biological role, catalyzes cyanide-resistant oxygen consumption. May increase respiration when the cytochrome respiratory pathway is restricted, or in response to low temperatures. The polypeptide is Alternative oxidase, mitochondrial (AOX1) (Cryptococcus neoformans var. grubii serotype A (strain H99 / ATCC 208821 / CBS 10515 / FGSC 9487) (Filobasidiella neoformans var. grubii)).